A 114-amino-acid chain; its full sequence is uncharacterized protein (114 aa).

This sequence to E.coli YggL.

This is an uncharacterized protein from Haemophilus influenzae (strain ATCC 51907 / DSM 11121 / KW20 / Rd).